The following is a 175-amino-acid chain: Adenine phosphoribosyltransferase (175 aa).

This sequence belongs to the purine/pyrimidine phosphoribosyltransferase family. In terms of assembly, homodimer.

The protein resides in the cytoplasm. It catalyses the reaction AMP + diphosphate = 5-phospho-alpha-D-ribose 1-diphosphate + adenine. It functions in the pathway purine metabolism; AMP biosynthesis via salvage pathway; AMP from adenine: step 1/1. Functionally, catalyzes a salvage reaction resulting in the formation of AMP, that is energically less costly than de novo synthesis. The sequence is that of Adenine phosphoribosyltransferase from Francisella tularensis subsp. tularensis (strain WY96-3418).